The sequence spans 568 residues: MDQDAFILKEDSEVERKAPGGRESLSDVIGFLDAVLSSEPTDIGGDRSWLHNTINTSQGPGSAHRAKSEGEGEVSTPSTQDNRSGEESRVSGRTSKPEAEAHAGNLDKQNIHWAFRGRTGTNSVSQDLGDGGDSGILENPPNERGYPRSGIEDENREMAAHPDKRGEDQAEGLPEEVRGGTSLPDEGEGGASNNGRSMEPGSSHSARVTGVLVIPSPELEEAVLRRNKRRPTNSGSKPLTPATVPGTRSPPLNRYNSTGPPPGKPPSTQDEHINSGDTPAVRVKDRKPPIGTRSVSDCPANGRPIHPGIETDSTKKGIGENTSSMKEMATLLTGLGVIQSAQEFESSRDASYVFARRALKSANYAEMTFNVCGLILSAEKSSARKVDENKQLLKQIQENVESFRDIYKRFSEYQKEQNSLLMSNLSTLHIITDRGGKTDNTDSLTRSPSVFAKSKENKTKATRFDPSMETLEDMKYKPDLIREDEFRDEIRNPVYQERDTEPRASNASRLFPSKEKPTMHSLRLVIESSPLSRAEKAAYVKSLSKCKTDQEVKAVMELVEEDIESLTN.

Disordered stretches follow at residues 1–22 (MDQD…PGGR) and 40–320 (PTDI…GIGE). Residues 7-20 (ILKEDSEVERKAPG) show a composition bias toward basic and acidic residues. Residues 33–41 (DAVLSSEPT) are N0 binding. Residues 50–60 (LHNTINTSQGP) show a composition bias toward polar residues. A Phosphoserine; by host modification is found at Ser68. The segment covering 83-101 (RSGEESRVSGRTSKPEAEA) has biased composition (basic and acidic residues). Ser125 bears the Phosphoserine; by host mark. The span at 150-168 (GIEDENREMAAHPDKRGED) shows a compositional bias: basic and acidic residues. Residues 191 to 206 (ASNNGRSMEPGSSHSA) are compositionally biased toward polar residues. Phosphoserine; by host occurs at positions 192, 249, and 257. The interval 344 to 411 (FESSRDASYV…SFRDIYKRFS (68 aa)) is multimerization. Residues 364–429 (YAEMTFNVCG…LLMSNLSTLH (66 aa)) are a coiled coil. The segment at 412 to 445 (EYQKEQNSLLMSNLSTLHIITDRGGKTDNTDSLT) is l protein binding. Phosphoserine; by host is present on residues Ser447 and Ser449. The tract at residues 479-568 (DLIREDEFRD…VEEDIESLTN (90 aa)) is interaction with the nucleocapsid (N-RNA).

This sequence belongs to the respirovirus P protein family. As to quaternary structure, homotetramer. Interacts (via multimerization domain) with polymerase L; this interaction forms the polymerase complex. Interacts (via N-terminus) with N0; this interaction allows P to chaperon N0 before encapsidation and form the N-P complex. Interacts (via C-terminus) with N-RNA template; this interaction positions the polymerase on the template. In terms of processing, phosphorylated by PKC/PRKCZ, and other unknown kinases. Phosphorylation is necessary for viral transcription and replication. The N-terminus contains the majority of phosphorylated sites. Ser-249 is the major site of phosphorylation, but is not necessary for most functions.

The protein resides in the host cytoplasm. Essential cofactor of the RNA polymerase L that plays a central role in the transcription and replication by forming the polymerase complex with RNA polymerase L and recruiting L to the genomic N-RNA template for RNA synthesis. Also plays a central role in the encapsidation of nascent RNA chains by forming the encapsidation complex with the nucleocapsid protein N (N-P complex). Acts as a chaperone for newly synthesized free N protein, so-called N0, allowing encapsidation of nascent RNA chains during replication. The nucleoprotein protein N prevents excessive phosphorylation of P, which leads to down-regulation of viral transcription/ replication. Participates, together with N, in the formation of viral factories (viroplasms), which are large inclusions in the host cytoplasm where replication takes place. Recruits host PI4KB and remodel the host endoplasmic reticulum membrane to form viral replication factories. This Sendai virus (strain 6/94) (SeV) protein is Phosphoprotein (P/V/C).